The primary structure comprises 31 residues: Cycloviolacin-O23 (31 aa).

The segment at residues 1–31 (GLPTCGETCFGGTCNTPGCTCDSSWPICTHN) is a cross-link (cyclopeptide (Gly-Asn)). Intrachain disulfides connect C5–C19, C9–C21, and C14–C28.

This is a cyclic peptide. Expressed in leaves but not in petals, petioles, roots and runners (at protein level).

Its function is as follows. Probably participates in a plant defense mechanism. The protein is Cycloviolacin-O23 of Viola odorata (Sweet violet).